Consider the following 138-residue polypeptide: uncharacterized protein (138 aa).

Position 110 is a phosphoserine (S110).

The protein localises to the cytoplasm. It is found in the nucleus. This is an uncharacterized protein from Schizosaccharomyces pombe (strain 972 / ATCC 24843) (Fission yeast).